The primary structure comprises 298 residues: uncharacterized protein (298 aa).

Asp-119 is a catalytic residue.

The protein belongs to the pseudouridine synthase RluA family.

The enzyme catalyses a uridine in RNA = a pseudouridine in RNA. This is an uncharacterized protein from Helicobacter pylori (strain ATCC 700392 / 26695) (Campylobacter pylori).